Reading from the N-terminus, the 507-residue chain is MVTIQADEISNIIRERIEQYNREVKIVNTGTVLQVGDGIARIHGLDEVMAGELVEFEEGTIGIALNLESNNVGVVLMGDGLMIQEGSSVKATGRIAQIPVSEGYLGRVINALAKPIDGRGEISASESRLIESPAPGIISRRSVYEPLQTGLIAIDSMIPIGRGQRELIIGDRQTGKTAVATDTILNQKGQNVICVYVAIGQKASSVAQVVTTFQERGAMEYTIVVAETADSPATLQYLAPYTGAALAEYFMYRERHTSIIYDDPSKQAQAYRQMSLLLRRPPGREAYPGDVFYLHSRLLERAAKSSSRLGEGSMTALPIVETQSGDVSAYIPTNVISITDGQIFLSADLFNAGIRPAINVGISVSRVGSAAQIKAMKQVAGKSKLELAQFAELEAFAQFASDLDKATQNQLARGQRLRELLKQSQSAPLTVEEQIVTIYTGTNGYLDSLEIGQVKKFLVQLRTYLKTNKPQFQEIISSTKTFTEEAEALLKEAIQEQMERFLLQEQT.

ATP is bound at residue 170 to 177 (GDRQTGKT).

Belongs to the ATPase alpha/beta chains family. In terms of assembly, F-type ATPases have 2 components, CF(1) - the catalytic core - and CF(0) - the membrane proton channel. CF(1) has five subunits: alpha(3), beta(3), gamma(1), delta(1), epsilon(1). CF(0) has four main subunits: a, b, b' and c.

The protein resides in the plastid. The protein localises to the chloroplast thylakoid membrane. The catalysed reaction is ATP + H2O + 4 H(+)(in) = ADP + phosphate + 5 H(+)(out). In terms of biological role, produces ATP from ADP in the presence of a proton gradient across the membrane. The alpha chain is a regulatory subunit. The sequence is that of ATP synthase subunit alpha, chloroplastic from Buxus microphylla (Littleleaf boxwood).